We begin with the raw amino-acid sequence, 109 residues long: Thioredoxin 1 (109 aa).

A Thioredoxin domain is found at 2–109 (SDKIIHLTDD…LKEFLDANLA (108 aa)). Catalysis depends on nucleophile residues C33 and C36. A disulfide bridge connects residues C33 and C36. K70 is subject to N6-acetyllysine.

The protein belongs to the thioredoxin family. In terms of assembly, monomer.

In terms of biological role, participates in various redox reactions through the reversible oxidation of its active center dithiol to a disulfide and catalyzes dithiol-disulfide exchange reactions. The protein is Thioredoxin 1 (trxA) of Escherichia coli O157:H7.